The sequence spans 956 residues: Netrin receptor UNC5D (956 aa).

The signal sequence occupies residues 1 to 30 (MGTGAADGSRGARRWLPWLGLFFWAAGAAA). The Extracellular portion of the chain corresponds to 31 to 382 (ARGADGSEIL…SRRGIENASD (352 aa)). Residues 52 to 149 (PHFIEEPEDA…LGTSKSRKAS (98 aa)) enclose the Ig-like domain. Disulfide bonds link C73–C134, C85–C132, C178–C229, C262–C299, C266–C303, C277–C289, C318–C352, C322–C357, and C330–C342. The segment at 89–91 (WVH) is important for interaction with FLRT2. 2 N-linked (GlcNAc...) asparagine glycosylation sites follow: N115 and N226. The Ig-like C2-type domain occupies 151-242 (RIAYLRKNFE…NIVAKRRSLS (92 aa)). 2 consecutive TSP type-1 domains span residues 250-304 (NGGW…ALCP) and 306-358 (DGSW…GLCI). Residues N351 and N379 are each glycosylated (N-linked (GlcNAc...) asparagine). Residues 383–403 (IALYSGLGAAVVAVAVLVIGV) traverse the membrane as a helical segment. The Cytoplasmic segment spans residues 404-956 (TLYRRSHSDY…DFNYSRQNGL (553 aa)). One can recognise a ZU5 domain in the interval 545–685 (LRTTGVFGHL…FGTYALTGEP (141 aa)). The region spanning 862–939 (QRICATFDTP…RTHTKLSNIT (78 aa)) is the Death domain.

Belongs to the unc-5 family. Interacts (via extracellular domain) with FLRT2 and FLRT3 (via extracellular domain); the interaction is direct. Has higher affinity for FLRT2. Identified in a complex with FLRT3 and ADGRL3; does not interact with ADGRL3 by itself. In terms of processing, proteolytically cleaved by caspases during apoptosis. The cleavage does not take place when the receptor is associated with netrin ligand. Its cleavage by caspases is required to induce apoptosis. As to expression, detected in multipolar cells in the brain subventricular zone (at protein level). Detected in embryonic brain neocortex, especially in the subventricular zone. Detected in multipolar cells in the brain subventricular zone. Detected in brain neocortex from young pups, especially in the somatosensory cortex. Expressed in developing limb and mammary gland.

Its subcellular location is the cell membrane. Its function is as follows. Receptor for the netrin NTN4 that promotes neuronal cell survival. Plays a role in cell-cell adhesion and cell guidance. Receptor for netrin involved in cell migration. Plays a role in the regulation of neuronal cell migration in the developing brain via its interaction with FLRT2. Plays a role in axon guidance by mediating axon repulsion of neuronal growth cones in the developing nervous system upon ligand binding. May play a role in apoptosis in response to DNA damage. It also acts as a dependence receptor required for apoptosis induction when not associated with netrin ligand. Mediates cell-cell adhesion via its interaction with FLRT3 on an adjacent cell. The chain is Netrin receptor UNC5D (Unc5d) from Mus musculus (Mouse).